A 956-amino-acid polypeptide reads, in one-letter code: Bromodomain testis-specific protein (956 aa).

The 107-residue stretch at 26 to 132 (RLTNQLQFLQ…KLFMQKLSQM (107 aa)) folds into the Bromo 1 domain. S186 carries the post-translational modification Phosphoserine. A Nuclear localization signal motif is present at residues 208–219 (KGVKRRADTTTP). The tract at residues 210–239 (VKRRADTTTPTTSIAKASSESPPTLRETKP) is disordered. The span at 216–231 (TTTPTTSIAKASSESP) shows a compositional bias: polar residues. Positions 266–375 (VKVTEQLKHC…DVFELHFAKI (110 aa)) constitute a Bromo 2 domain. 4 disordered regions span residues 391 to 420 (NSAQ…ERVQ), 442 to 508 (VPLR…PMNY), 607 to 747 (NQLN…HSQQ), and 859 to 934 (LEHN…RREA). Low complexity predominate over residues 392 to 409 (SAQALSRESSSEASSGDA). Positions 417–442 (ERVQHLAKLQEQLNAVHQQLQVLSQV) form a coiled coil. Positions 445-463 (RKLKKKNEKSKRAPKRKKV) are enriched in basic residues. The 83-residue stretch at 496–578 (KSEEEDNAKP…ACLRKRSLKP (83 aa)) folds into the NET domain. Positions 625-640 (PPPPPPPPPPPPPPPE) are enriched in pro residues. Residues 649 to 688 (DSSSSSGSGSGSSSSSSGSSSSSSSSGSASSSSDSSSSDS) are compositionally biased toward low complexity. A compositionally biased stretch (polar residues) spans 714–724 (KQIQSSVQDIT). Residues 844–940 (EKEVKARTQE…RREAMAGTID (97 aa)) adopt a coiled-coil conformation. 2 stretches are compositionally biased toward basic and acidic residues: residues 859-874 (LEHN…ENQR) and 915-934 (LLKD…RREA).

Belongs to the BET family. As to quaternary structure, interacts with SMARCE1. Interacts with mRNA splicing machinery proteins SRSF2, DDX5, HNRNPK and TARDBP. Interacts with the acetylated N-terminus of histone H1, H2, H3 and H4. Interacts with P-TEFb components CDK9 and CCNT1/cyclin-T1. In terms of processing, ubiquitinated in a SPOP-dependent manner, leading to proteasomal degradation. As to expression, testis-specific. Expressed in germinal cells from the early meiotic (pachytene) spermatocytes and during spermiogenesis in the round and elongating spermatids until the condensed late spermatids. No expression seen in spermatogonia.

The protein resides in the nucleus. Functionally, testis-specific chromatin protein that specifically binds histone H4 acetylated at 'Lys-5' and 'Lys-8' (H4K5ac and H4K8ac, respectively) and plays a key role in spermatogenesis. Required in late pachytene spermatocytes: plays a role in meiotic and post-meiotic cells by binding to acetylated histones at the promoter of specific meiotic and post-meiotic genes, facilitating their activation at the appropriate time. In the post-meiotic phase of spermatogenesis, binds to hyperacetylated histones and participates in their general removal from DNA. Also recognizes and binds a subset of butyrylated histones: able to bind histone H4 butyrylated at 'Lys-8' (H4K8ac), while it is not able to bind H4 butyrylated at 'Lys-5' (H4K5ac). Also acts as a component of the splicing machinery in pachytene spermatocytes and round spermatids and participates in 3'-UTR truncation of specific mRNAs in post-meiotic spermatids. Required for chromocenter organization, a structure comprised of peri-centromeric heterochromatin. In Mus musculus (Mouse), this protein is Bromodomain testis-specific protein (Brdt).